The chain runs to 276 residues: MEPYVVDNLNRDDCVMIVWSGEVQDDVMCDLKAAVSTHVKKLHFENLENFTNSSTISSQFHGCSSVILCGWPNPININTLERGLLSNLSSCLQPGGRLICRESTMEDWNSFRKNLTLSGYVNPYQLPGGNHLIFIAFVPSNYTRGSSIKLPWAHSDIEAAWENVDNETSYDVDKNLINTNSLLQKSDYVTPLAACGQEFAKNSIGKRKRACKNCTCGLAEIEATEVEDKSVVSISSCGNCYLGDAFRCSTCPYRGLPPFKPGDRILIPDDVLKADL.

The tract at residues 1 to 152 (MEPYVVDNLN…TRGSSIKLPW (152 aa)) is N-terminal SAM-like domain. The linker stretch occupies residues 152–189 (WAHSDIEAAWENVDNETSYDVDKNLINTNSLLQKSDYV). [2Fe-2S] cluster-binding residues include Cys-195, Cys-211, Cys-214, and Cys-216. Positions 195–216 (CGQEFAKNSIGKRKRACKNCTC) are fe-S binding site A. Positions 237, 240, 248, and 251 each coordinate [4Fe-4S] cluster. Short sequence motifs (cx2C motif) lie at residues 237–240 (CGNC) and 248–251 (CSTC). Positions 237–251 (CGNCYLGDAFRCSTC) are fe-S binding site B.

The protein belongs to the anamorsin family. Monomer. [2Fe-2S] cluster serves as cofactor. It depends on [4Fe-4S] cluster as a cofactor.

It is found in the cytoplasm. The protein resides in the mitochondrion intermembrane space. Component of the cytosolic iron-sulfur (Fe-S) protein assembly (CIA) machinery. Required for the maturation of extramitochondrial Fe-S proteins. Part of an electron transfer chain functioning in an early step of cytosolic Fe-S biogenesis, facilitating the de novo assembly of a [4Fe-4S] cluster on the cytosolic Fe-S scaffold complex. Electrons are transferred from NADPH via a FAD- and FMN-containing diflavin oxidoreductase. Together with the diflavin oxidoreductase, also required for the assembly of the diferric tyrosyl radical cofactor of ribonucleotide reductase (RNR), probably by providing electrons for reduction during radical cofactor maturation in the catalytic small subunit. The chain is Anamorsin homolog from Schistosoma japonicum (Blood fluke).